Consider the following 212-residue polypeptide: Ropporin-1 (212 aa).

One can recognise an RIIa domain in the interval 12 to 43 (PELPELLKQFTKAAIRSQPQDLIQWAAEYFGA). A Phosphoserine modification is found at serine 56. The interval 209–212 (VRLE) is interaction with RHPN1.

It belongs to the ropporin family. In terms of assembly, homodimer. Interacts with AKAP3. May interact with SPA17. Interacts with RHPN1. Interacts with FSCB; the interaction increases upon spermatozoa capacitation conditions. Interacts with CFAP61. Post-translationally, sumoylated, sumoylation decreases upon spermatozoa capacitation conditions.

It localises to the cell projection. The protein localises to the cilium. Its subcellular location is the flagellum. Its function is as follows. Important for male fertility. With ROPN1L, involved in fibrous sheath integrity and sperm motility, plays a role in PKA-dependent signaling processes required for spermatozoa capacitation. The chain is Ropporin-1 (ROPN1) from Bos taurus (Bovine).